The chain runs to 84 residues: Gomesin-like peptide (84 aa).

Positions 1-23 (MNRTRALVCLFLAVLILAHESEA) are cleaved as a signal peptide. The residue at position 24 (Gln24) is a Pyrrolidone carboxylic acid. Disulfide bonds link Cys25–Cys38 and Cys29–Cys34. Arg41 is subject to Arginine amide. Residues 42–84 (GKRSVEEPSGGAQVVEKRAVDDADIPSAVEERELDEEESIEFR) constitute a propeptide that is removed on maturation.

As to expression, expressed by the venom gland.

Its subcellular location is the secreted. Antibacterial peptide. The sequence is that of Gomesin-like peptide from Hadronyche infensa (Fraser island funnel-web spider).